Consider the following 449-residue polypeptide: Glucose-6-phosphate isomerase (449 aa).

The Proton donor role is filled by Glu-291. Residues His-312 and Lys-426 contribute to the active site.

The protein belongs to the GPI family.

The protein resides in the cytoplasm. It catalyses the reaction alpha-D-glucose 6-phosphate = beta-D-fructose 6-phosphate. It functions in the pathway carbohydrate biosynthesis; gluconeogenesis. Its pathway is carbohydrate degradation; glycolysis; D-glyceraldehyde 3-phosphate and glycerone phosphate from D-glucose: step 2/4. Functionally, catalyzes the reversible isomerization of glucose-6-phosphate to fructose-6-phosphate. The protein is Glucose-6-phosphate isomerase of Streptococcus pyogenes serotype M5 (strain Manfredo).